The chain runs to 420 residues: Phosphatidylinositol 5-phosphate 4-kinase type-2 gamma (420 aa).

Residue Ala-2 is modified to N-acetylalanine. Ser-26 is subject to Phosphoserine. Positions 43–419 constitute a PIPK domain; sequence AADPLVGVFL…RFLDFISNIF (377 aa). The segment at 69–75 is required for interaction with PIP5K1A; it reads VMLLPDD. At Ser-349 the chain carries Phosphoserine.

As to quaternary structure, interacts with PIP5K1A; the interaction inhibits PIP5K1A kinase activity. Post-translationally, phosphorylated, phosphorylation is induced by EGF. As to expression, widely expressed, with the most abundant expression in kidney.

The protein resides in the endoplasmic reticulum. It is found in the cytoplasm. The catalysed reaction is a 1,2-diacyl-sn-glycero-3-phospho-(1D-myo-inositol-5-phosphate) + ATP = a 1,2-diacyl-sn-glycero-3-phospho-(1D-myo-inositol-4,5-bisphosphate) + ADP + H(+). It carries out the reaction 1,2-dihexadecanoyl-sn-glycero-3-phospho-(1D-myo-inositol-5-phosphate) + ATP = 1,2-dihexadecanoyl-sn-glycero-3-phospho-(1D-myo-inositol-4,5-bisphosphate) + ADP + H(+). It catalyses the reaction 1,2-dihexadecanoyl-sn-glycero-3-phospho-(1D-myo-inositol-5-phosphate) + GTP = 1,2-dihexadecanoyl-sn-glycero-3-phospho-(1D-myo-inositol-4,5-bisphosphate) + GDP + H(+). Its function is as follows. Phosphatidylinositol 5-phosphate 4-kinase with low enzymatic activity. May be a GTP sensor, has higher GTP-dependent kinase activity than ATP-dependent kinase activity. PIP4Ks negatively regulate insulin signaling through a catalytic-independent mechanism. They interact with PIP5Ks and suppress PIP5K-mediated PtdIns(4,5)P2 synthesis and insulin-dependent conversion to PtdIns(3,4,5)P3. This chain is Phosphatidylinositol 5-phosphate 4-kinase type-2 gamma, found in Rattus norvegicus (Rat).